A 282-amino-acid polypeptide reads, in one-letter code: Nucleotide-binding protein Ping_2894 (282 aa).

Residue 8-15 (GRSGSGKT) coordinates ATP. 56–59 (DIRN) is a GTP binding site.

The protein belongs to the RapZ-like family.

Displays ATPase and GTPase activities. This is Nucleotide-binding protein Ping_2894 from Psychromonas ingrahamii (strain DSM 17664 / CCUG 51855 / 37).